A 462-amino-acid polypeptide reads, in one-letter code: L-seryl-tRNA(Sec) selenium transferase (462 aa).

Position 292 is an N6-(pyridoxal phosphate)lysine (Lys292).

It belongs to the SelA family. Pyridoxal 5'-phosphate is required as a cofactor.

Its subcellular location is the cytoplasm. The catalysed reaction is L-seryl-tRNA(Sec) + selenophosphate + H(+) = L-selenocysteinyl-tRNA(Sec) + phosphate. It functions in the pathway aminoacyl-tRNA biosynthesis; selenocysteinyl-tRNA(Sec) biosynthesis; selenocysteinyl-tRNA(Sec) from L-seryl-tRNA(Sec) (bacterial route): step 1/1. Functionally, converts seryl-tRNA(Sec) to selenocysteinyl-tRNA(Sec) required for selenoprotein biosynthesis. The protein is L-seryl-tRNA(Sec) selenium transferase of Clostridium perfringens (strain ATCC 13124 / DSM 756 / JCM 1290 / NCIMB 6125 / NCTC 8237 / Type A).